The sequence spans 86 residues: Large ribosomal subunit protein bL27 (86 aa).

Gly residues predominate over residues 1–10 (MAQKKGGGST). Residues 1–21 (MAQKKGGGSTRNGRDSESKRL) form a disordered region.

It belongs to the bacterial ribosomal protein bL27 family.

The protein is Large ribosomal subunit protein bL27 of Cupriavidus taiwanensis (strain DSM 17343 / BCRC 17206 / CCUG 44338 / CIP 107171 / LMG 19424 / R1) (Ralstonia taiwanensis (strain LMG 19424)).